A 512-amino-acid polypeptide reads, in one-letter code: ATP synthase subunit alpha 1 (512 aa).

An ATP-binding site is contributed by 169–176 (GDRQTGKT).

Belongs to the ATPase alpha/beta chains family. F-type ATPases have 2 components, CF(1) - the catalytic core - and CF(0) - the membrane proton channel. CF(1) has five subunits: alpha(3), beta(3), gamma(1), delta(1), epsilon(1). CF(0) has four main subunits: a(1), b(1), b'(1) and c(9-12).

It is found in the cell inner membrane. The catalysed reaction is ATP + H2O + 4 H(+)(in) = ADP + phosphate + 5 H(+)(out). Produces ATP from ADP in the presence of a proton gradient across the membrane. The alpha chain is a regulatory subunit. The chain is ATP synthase subunit alpha 1 from Cereibacter sphaeroides (strain ATCC 17029 / ATH 2.4.9) (Rhodobacter sphaeroides).